Here is a 628-residue protein sequence, read N- to C-terminus: uncharacterized protein (628 aa).

This sequence belongs to the ATP-dependent AMP-binding enzyme family.

This is an uncharacterized protein from Pseudomonas aeruginosa (strain ATCC 15692 / DSM 22644 / CIP 104116 / JCM 14847 / LMG 12228 / 1C / PRS 101 / PAO1).